A 139-amino-acid polypeptide reads, in one-letter code: Probable transcription termination protein NusA (139 aa).

Positions 31 to 97 (DDRVVYVVTA…YNVTVSENDT (67 aa)) constitute a KH domain.

The protein belongs to the NusA family.

It is found in the cytoplasm. In terms of biological role, participates in transcription termination. The polypeptide is Probable transcription termination protein NusA (Halobacterium salinarum (strain ATCC 29341 / DSM 671 / R1)).